Reading from the N-terminus, the 338-residue chain is Ribosomal RNA small subunit methyltransferase H (338 aa).

S-adenosyl-L-methionine contacts are provided by residues 46 to 48, Asp-63, Phe-90, Asp-106, and Gln-113; that span reads GGY.

This sequence belongs to the methyltransferase superfamily. RsmH family.

It is found in the cytoplasm. It carries out the reaction cytidine(1402) in 16S rRNA + S-adenosyl-L-methionine = N(4)-methylcytidine(1402) in 16S rRNA + S-adenosyl-L-homocysteine + H(+). Specifically methylates the N4 position of cytidine in position 1402 (C1402) of 16S rRNA. In Mesorhizobium japonicum (strain LMG 29417 / CECT 9101 / MAFF 303099) (Mesorhizobium loti (strain MAFF 303099)), this protein is Ribosomal RNA small subunit methyltransferase H.